The following is a 165-amino-acid chain: Basic leucine zipper 43 (165 aa).

In terms of domain architecture, bZIP spans N70 to L133. The basic motif stretch occupies residues R72–R93. Positions L98 to L112 are leucine-zipper.

Forms heterodimers with BZIP34 and BZIP61.

The protein resides in the nucleus. Functionally, probable transcription factor involved in somatic embryogenesis. Acts as a positive regulator of BHLH109. The protein is Basic leucine zipper 43 of Arabidopsis thaliana (Mouse-ear cress).